The following is a 627-amino-acid chain: Endoglucanase 5 (627 aa).

Positions 1–26 (MRKFGGSLFGVSLLLSVLLAAATAAA) are cleaved as a signal peptide. Residue Asp83 is the Nucleophile of the active site. Asn196 is a glycosylation site (N-linked (GlcNAc...) asparagine). His416 is a catalytic residue. The N-linked (GlcNAc...) asparagine glycan is linked to Asn465. Residues Asp468 and Glu477 contribute to the active site. Asn561 carries N-linked (GlcNAc...) asparagine glycosylation.

This sequence belongs to the glycosyl hydrolase 9 (cellulase E) family.

It is found in the secreted. It catalyses the reaction Endohydrolysis of (1-&gt;4)-beta-D-glucosidic linkages in cellulose, lichenin and cereal beta-D-glucans.. In Arabidopsis thaliana (Mouse-ear cress), this protein is Endoglucanase 5.